An 872-amino-acid polypeptide reads, in one-letter code: Probable LRR receptor-like serine/threonine-protein kinase At1g51880 (872 aa).

Positions 1–23 (MKSIHGFLLFLITAYVILESVQA) are cleaved as a signal peptide. At 24-513 (QDQLGFISLD…GKSKKVPMIP (490 aa)) the chain is on the extracellular side. N-linked (GlcNAc...) asparagine glycosylation is found at Asn40, Asn49, Asn96, Asn181, Asn255, Asn268, Asn294, Asn339, and Asn401. 3 LRR repeats span residues 411-434 (RIIS…SKLT), 435-457 (QLIE…FADM), and 459-482 (LLKL…IQQR). 2 N-linked (GlcNAc...) asparagine glycosylation sites follow: Asn464 and Asn472. A helical membrane pass occupies residues 514-534 (IVASVAGVFALLVILAIFFVV). Residues 535–872 (RRKNGESNKG…SASEFSPGAR (338 aa)) lie on the Cytoplasmic side of the membrane. Thr557 carries the phosphothreonine modification. One can recognise a Protein kinase domain in the interval 566 to 838 (NNFERVLGKG…HVVTELNECV (273 aa)). Residues 572 to 580 (LGKGGFGTV) and Lys593 each bind ATP. Tyr638 is subject to Phosphotyrosine. The active-site Proton acceptor is Asp690. Ser724 is subject to Phosphoserine. A phosphothreonine mark is found at Thr725 and Thr730. At Tyr738 the chain carries Phosphotyrosine.

It belongs to the protein kinase superfamily. Ser/Thr protein kinase family.

The protein resides in the membrane. It carries out the reaction L-seryl-[protein] + ATP = O-phospho-L-seryl-[protein] + ADP + H(+). It catalyses the reaction L-threonyl-[protein] + ATP = O-phospho-L-threonyl-[protein] + ADP + H(+). This is Probable LRR receptor-like serine/threonine-protein kinase At1g51880 from Arabidopsis thaliana (Mouse-ear cress).